We begin with the raw amino-acid sequence, 316 residues long: MLKRNKVVLVGAGGVGSSFAYALTIDNSLVHELIIIDLAQDKAKGEVMDLNHGQMFLEKNIKIEFGNYDDCSDADIVVITAGLNQKPGETRLDLVGKNTKIFKEIVTSVVSSGFSGIFVIASNPVDIMTYVTMKYSNFPTHKVIGTGTTLDTSRLRYFLAERFNVNTQNIHSYIMGEHGDSSFATWDETKIAMKSLSEYLAEGKVSDAELDEMHKNVVNAAYEVIKLKGATYYAIGLGIKKIVNAIISDQNLILPISSYINGQYGNFVKDIYIGAPSVVCKDGIKEVLDFTISDRELEKFKISASQLKSYIDKIEF.

NAD(+) contacts are provided by residues valine 15, aspartate 37, lysine 42, tyrosine 68, and 82 to 83; that span reads GL. Residues glutamine 85, arginine 91, and 123 to 126 each bind substrate; that span reads NPVD. NAD(+) is bound by residues 121-123 and threonine 146; that span reads ASN. Residue 151-154 coordinates substrate; sequence DTSR. Beta-D-fructose 1,6-bisphosphate-binding residues include arginine 156 and histidine 171. Histidine 178 (proton acceptor) is an active-site residue. The residue at position 222 (tyrosine 222) is a Phosphotyrosine. Threonine 231 is a substrate binding site.

The protein belongs to the LDH/MDH superfamily. LDH family. In terms of assembly, homotetramer.

The protein resides in the cytoplasm. It catalyses the reaction (S)-lactate + NAD(+) = pyruvate + NADH + H(+). Its pathway is fermentation; pyruvate fermentation to lactate; (S)-lactate from pyruvate: step 1/1. Its activity is regulated as follows. Allosterically activated by fructose 1,6-bisphosphate (FBP). Functionally, catalyzes the conversion of lactate to pyruvate. This is L-lactate dehydrogenase from Borrelia turicatae (strain 91E135).